The primary structure comprises 343 residues: MDCSELDSTEKSKPSQLLRAINQIYEEGREESTHSETNAASVEKTMNLLKEKAETGDSQATFLLGQLHYVQGCYAEAELIFDRIKDKDPQALYQLAVIYYDGLGTKEDLGRAVEYMGRVAFWDSSEAGSVRYAALYNLGQAYLEGFGVQASSSEAERLWLLAADNGNPNASVKAQSALGMFYSRPESLDLRKAFFWHSQACGNGSLESQAALGLMYLYGHGVQRDSDSALFCLKEAAERGSVYAQGHLTACYYRRQLYSRAAALGQRVCEYKDTAAIAQQTDCLEEYVRKGIAIGMFYYARCLHLGRGVPQNRDKAKHYCTQAVRIDPLICKELQIDAAHGKI.

The TPR repeat unit spans residues 58-91; sequence SQATFLLGQLHYVQGCYAEAELIFDRIKDKDPQA. Sel1-like repeat units lie at residues 92-124, 132-167, 172-205, 206-241, 242-273, and 293-328; these read LYQL…FWDS, YAAL…DNGN, VKAQ…GNGS, LESQ…ERGS, VYAQ…EYKD, and AIGM…RIDP.

Its subcellular location is the cytoplasm. In terms of biological role, may act as an adapter that regulates LRP2 function. This Danio rerio (Zebrafish) protein is LRP2-binding protein (lrp2bp).